Reading from the N-terminus, the 252-residue chain is Urease accessory protein UreD (252 aa).

This sequence belongs to the UreD family. As to quaternary structure, ureD, UreF and UreG form a complex that acts as a GTP-hydrolysis-dependent molecular chaperone, activating the urease apoprotein by helping to assemble the nickel containing metallocenter of UreC. The UreE protein probably delivers the nickel.

The protein resides in the cytoplasm. Its function is as follows. Required for maturation of urease via the functional incorporation of the urease nickel metallocenter. The polypeptide is Urease accessory protein UreD (Streptomyces avermitilis (strain ATCC 31267 / DSM 46492 / JCM 5070 / NBRC 14893 / NCIMB 12804 / NRRL 8165 / MA-4680)).